Reading from the N-terminus, the 250-residue chain is Small ribosomal subunit protein uS3 (250 aa).

Residues 16–85 (IDEYLEKELE…NPQIEVKEVS (70 aa)) form the KH type-2 domain.

The protein belongs to the universal ribosomal protein uS3 family. As to quaternary structure, part of the 30S ribosomal subunit.

Its function is as follows. Binds the lower part of the 30S subunit head. This Methanobrevibacter smithii (strain ATCC 35061 / DSM 861 / OCM 144 / PS) protein is Small ribosomal subunit protein uS3.